A 301-amino-acid polypeptide reads, in one-letter code: 4-hydroxy-tetrahydrodipicolinate synthase (301 aa).

Pyruvate is bound at residue Thr-53. The active-site Proton donor/acceptor is the Tyr-142. Lys-170 acts as the Schiff-base intermediate with substrate in catalysis. Val-212 serves as a coordination point for pyruvate.

Belongs to the DapA family. Homotetramer; dimer of dimers.

It localises to the cytoplasm. The enzyme catalyses L-aspartate 4-semialdehyde + pyruvate = (2S,4S)-4-hydroxy-2,3,4,5-tetrahydrodipicolinate + H2O + H(+). It participates in amino-acid biosynthesis; L-lysine biosynthesis via DAP pathway; (S)-tetrahydrodipicolinate from L-aspartate: step 3/4. Its function is as follows. Catalyzes the condensation of (S)-aspartate-beta-semialdehyde [(S)-ASA] and pyruvate to 4-hydroxy-tetrahydrodipicolinate (HTPA). This Synechocystis sp. (strain ATCC 27184 / PCC 6803 / Kazusa) protein is 4-hydroxy-tetrahydrodipicolinate synthase.